The following is an 83-amino-acid chain: Large ribosomal subunit protein eL43 (83 aa).

Zn(2+) contacts are provided by Cys-38, Cys-41, Cys-56, and Cys-59. The C4-type zinc finger occupies 38–59 (CPVCGRKAVKRISTGIWQCQKC).

This sequence belongs to the eukaryotic ribosomal protein eL43 family. Putative zinc-binding subfamily. As to quaternary structure, part of the 50S ribosomal subunit. Requires Zn(2+) as cofactor.

Binds to the 23S rRNA. This chain is Large ribosomal subunit protein eL43, found in Pyrococcus furiosus (strain ATCC 43587 / DSM 3638 / JCM 8422 / Vc1).